The following is a 201-amino-acid chain: Putative lipoprotein Hmuk_2215 (201 aa).

Residues Met-1–Gly-22 form the signal peptide. Cys-23 bears the N-acetylcysteine mark. A lipid anchor (S-archaeol cysteine) is attached at Cys-23. Disordered stretches follow at residues Glu-25–Glu-78 and Ala-182–Pro-201. Over residues Thr-69 to Glu-78 the composition is skewed to basic and acidic residues.

The protein resides in the cell membrane. The protein is Putative lipoprotein Hmuk_2215 of Halomicrobium mukohataei (strain ATCC 700874 / DSM 12286 / JCM 9738 / NCIMB 13541) (Haloarcula mukohataei).